Here is a 457-residue protein sequence, read N- to C-terminus: COBRA-like protein 3 (457 aa).

The N-terminal stretch at 1–35 (MAVGGAGSSRSVAPCCCCAVLLAAALLFSAPATTE) is a signal peptide. Residues asparagine 45, asparagine 170, asparagine 178, asparagine 217, asparagine 242, asparagine 258, asparagine 326, asparagine 341, and asparagine 361 are each glycosylated (N-linked (GlcNAc...) asparagine). Asparagine 430 carries the GPI-anchor amidated asparagine lipid modification. The propeptide at 431–457 (ASPLTKQPLTLSVLVFSIVLATLLAYA) is removed in mature form. A helical transmembrane segment spans residues 437–457 (QPLTLSVLVFSIVLATLLAYA).

The protein belongs to the COBRA family.

It is found in the cell membrane. Involved in determining the orientation of cell expansion, probably by playing an important role in cellulose deposition. May act by recruiting cellulose synthesizing complexes to discrete positions on the cell surface. This is COBRA-like protein 3 (BC1L4) from Oryza sativa subsp. japonica (Rice).